We begin with the raw amino-acid sequence, 186 residues long: UPF0397 protein SGO_0469 (186 aa).

Transmembrane regions (helical) follow at residues 14–34 (VVAT…SIPT), 50–70 (LFGV…GHAL), 77–97 (GNPW…VGLL), 119–139 (AQFV…DILI), and 152–172 (VVAT…LLIA).

The protein belongs to the UPF0397 family.

It localises to the cell membrane. The protein is UPF0397 protein SGO_0469 of Streptococcus gordonii (strain Challis / ATCC 35105 / BCRC 15272 / CH1 / DL1 / V288).